A 101-amino-acid chain; its full sequence is uncharacterized protein (101 aa).

This is an uncharacterized protein from Mycobacterium bovis (strain ATCC BAA-935 / AF2122/97).